We begin with the raw amino-acid sequence, 238 residues long: Ribonuclease PH (238 aa).

Phosphate-binding positions include arginine 86 and 124–126; that span reads GTR.

Belongs to the RNase PH family. Homohexameric ring arranged as a trimer of dimers.

The enzyme catalyses tRNA(n+1) + phosphate = tRNA(n) + a ribonucleoside 5'-diphosphate. In terms of biological role, phosphorolytic 3'-5' exoribonuclease that plays an important role in tRNA 3'-end maturation. Removes nucleotide residues following the 3'-CCA terminus of tRNAs; can also add nucleotides to the ends of RNA molecules by using nucleoside diphosphates as substrates, but this may not be physiologically important. Probably plays a role in initiation of 16S rRNA degradation (leading to ribosome degradation) during starvation. The protein is Ribonuclease PH of Pasteurella multocida (strain Pm70).